A 143-amino-acid polypeptide reads, in one-letter code: Nucleoside diphosphate kinase (143 aa).

Positions 11, 59, 87, 93, 104, and 114 each coordinate ATP. His-117 (pros-phosphohistidine intermediate) is an active-site residue.

This sequence belongs to the NDK family. In terms of assembly, homotetramer. Requires Mg(2+) as cofactor.

The protein resides in the cytoplasm. It carries out the reaction a 2'-deoxyribonucleoside 5'-diphosphate + ATP = a 2'-deoxyribonucleoside 5'-triphosphate + ADP. It catalyses the reaction a ribonucleoside 5'-diphosphate + ATP = a ribonucleoside 5'-triphosphate + ADP. Its function is as follows. Major role in the synthesis of nucleoside triphosphates other than ATP. The ATP gamma phosphate is transferred to the NDP beta phosphate via a ping-pong mechanism, using a phosphorylated active-site intermediate. The sequence is that of Nucleoside diphosphate kinase from Shewanella sp. (strain ANA-3).